Here is a 197-residue protein sequence, read N- to C-terminus: Ribonuclease HII (197 aa).

The 189-residue stretch at 9 to 197 (KLIAGVDEVG…APVKKALEQF (189 aa)) folds into the RNase H type-2 domain. Positions 15, 16, and 107 each coordinate a divalent metal cation.

Belongs to the RNase HII family. Mn(2+) serves as cofactor. The cofactor is Mg(2+).

Its subcellular location is the cytoplasm. The catalysed reaction is Endonucleolytic cleavage to 5'-phosphomonoester.. Endonuclease that specifically degrades the RNA of RNA-DNA hybrids. This Haemophilus influenzae (strain ATCC 51907 / DSM 11121 / KW20 / Rd) protein is Ribonuclease HII (rnhB).